Consider the following 264-residue polypeptide: Hydroxyethylthiazole kinase (264 aa).

Methionine 43 contributes to the substrate binding site. Residues lysine 119 and serine 165 each coordinate ATP. Glycine 192 is a substrate binding site.

This sequence belongs to the Thz kinase family. It depends on Mg(2+) as a cofactor.

It catalyses the reaction 5-(2-hydroxyethyl)-4-methylthiazole + ATP = 4-methyl-5-(2-phosphooxyethyl)-thiazole + ADP + H(+). It participates in cofactor biosynthesis; thiamine diphosphate biosynthesis; 4-methyl-5-(2-phosphoethyl)-thiazole from 5-(2-hydroxyethyl)-4-methylthiazole: step 1/1. Functionally, catalyzes the phosphorylation of the hydroxyl group of 4-methyl-5-beta-hydroxyethylthiazole (THZ). The protein is Hydroxyethylthiazole kinase of Methanocorpusculum labreanum (strain ATCC 43576 / DSM 4855 / Z).